A 424-amino-acid polypeptide reads, in one-letter code: Histidine--tRNA ligase (424 aa).

Belongs to the class-II aminoacyl-tRNA synthetase family. In terms of assembly, homodimer.

It is found in the cytoplasm. The enzyme catalyses tRNA(His) + L-histidine + ATP = L-histidyl-tRNA(His) + AMP + diphosphate + H(+). This chain is Histidine--tRNA ligase, found in Escherichia coli (strain 55989 / EAEC).